The chain runs to 37 residues: Large ribosomal subunit protein bL36c (37 aa).

The protein belongs to the bacterial ribosomal protein bL36 family.

The protein resides in the plastid. It is found in the chloroplast. The chain is Large ribosomal subunit protein bL36c from Ostreococcus tauri.